The chain runs to 588 residues: Thioredoxin domain-containing protein 3 (588 aa).

The region spanning A2–K119 is the Thioredoxin domain. A disulfide bridge links C39 with C42. NDK regions lie at residues I157–E257, L315–G455, and L456–N588. Residues G230 to Q261 are disordered.

It in the C-terminal section; belongs to the NDK family. As to quaternary structure, monomer. As to expression, testis-specific. Expressed only in primary spermatocytes and round spermatids.

Its subcellular location is the cytoplasm. Probably required during the final stages of sperm tail maturation in the testis and/or epididymis, where extensive disulfide bonding of fibrous sheath (FS) proteins occurs. In vitro, it has neither nucleoside diphosphate kinase (NDPK) activity nor reducing activity on disulfide bonds. Exhibits a 3'-5' exonuclease activity with a preference for single-stranded DNA, suggesting roles in DNA proofreading and repair. This Homo sapiens (Human) protein is Thioredoxin domain-containing protein 3.